A 214-amino-acid chain; its full sequence is Adenylate kinase (214 aa).

10-15 is an ATP binding site; that stretch reads GAGKGT. The tract at residues 30–59 is NMP; the sequence is STGDMFREAVASKSELGKKVEEILKRGDLV. AMP-binding positions include T31, R36, 57-59, 85-88, and Q92; these read DLV and GFPR. Positions 126–163 are LID; it reads NRRICSNCGKIYNLITLPPKVDGKCDVCGGTLYQREDD. R127 provides a ligand contact to ATP. C130 and C133 together coordinate Zn(2+). 136–137 serves as a coordination point for ATP; sequence IY. The Zn(2+) site is built by C150 and C153. Residues R160 and R171 each coordinate AMP. An ATP-binding site is contributed by L199.

It belongs to the adenylate kinase family. Monomer.

Its subcellular location is the cytoplasm. The enzyme catalyses AMP + ATP = 2 ADP. The protein operates within purine metabolism; AMP biosynthesis via salvage pathway; AMP from ADP: step 1/1. In terms of biological role, catalyzes the reversible transfer of the terminal phosphate group between ATP and AMP. Plays an important role in cellular energy homeostasis and in adenine nucleotide metabolism. The protein is Adenylate kinase of Thermosipho africanus (strain TCF52B).